We begin with the raw amino-acid sequence, 620 residues long: Chaperone protein HscA homolog (620 aa).

This sequence belongs to the heat shock protein 70 family.

Functionally, chaperone involved in the maturation of iron-sulfur cluster-containing proteins. Has a low intrinsic ATPase activity which is markedly stimulated by HscB. This chain is Chaperone protein HscA homolog, found in Pseudomonas fluorescens (strain ATCC BAA-477 / NRRL B-23932 / Pf-5).